The following is a 323-amino-acid chain: Elongation factor P--(R)-beta-lysine ligase (323 aa).

74 to 76 (SPE) contacts substrate. Residues 98–100 (RNE) and Asn107 each bind ATP. Tyr116 lines the substrate pocket. Position 242-243 (242-243 (EL)) interacts with ATP. Position 249 (Glu249) interacts with substrate. Residue Gly298 participates in ATP binding.

This sequence belongs to the class-II aminoacyl-tRNA synthetase family. EpmA subfamily. As to quaternary structure, homodimer.

It carries out the reaction D-beta-lysine + L-lysyl-[protein] + ATP = N(6)-((3R)-3,6-diaminohexanoyl)-L-lysyl-[protein] + AMP + diphosphate + H(+). Functionally, with EpmB is involved in the beta-lysylation step of the post-translational modification of translation elongation factor P (EF-P). Catalyzes the ATP-dependent activation of (R)-beta-lysine produced by EpmB, forming a lysyl-adenylate, from which the beta-lysyl moiety is then transferred to the epsilon-amino group of a conserved specific lysine residue in EF-P. This chain is Elongation factor P--(R)-beta-lysine ligase, found in Vibrio vulnificus (strain YJ016).